The primary structure comprises 259 residues: 14-3-3-like protein GF14 omega (259 aa).

Residues Ser-67, Ser-109, and Ser-190 each carry the phosphoserine modification. Thr-211 bears the Phosphothreonine mark.

This sequence belongs to the 14-3-3 family. As to quaternary structure, interacts with CINV1.

The protein localises to the nucleus. It localises to the cytoplasm. Its function is as follows. Is associated with a DNA binding complex that binds to the G box, a well-characterized cis-acting DNA regulatory element found in plant genes. This chain is 14-3-3-like protein GF14 omega (GRF2), found in Arabidopsis thaliana (Mouse-ear cress).